We begin with the raw amino-acid sequence, 29 residues long: GLWSTIKQKGKEAAIAAAKAAGQAALGAL.

L29 carries the post-translational modification Leucine amide.

It belongs to the frog skin active peptide (FSAP) family. Dermaseptin subfamily. In terms of tissue distribution, expressed by the skin glands.

It is found in the secreted. Its function is as follows. Has antibacterial activity against the Gram-negative bacterium E.coli and the Gram-positive bacterium S.aureus. Has antiprotozoal activity against L.amazonensis. Has antifungal activity. Has no hemolytic activity. This is Dermaseptin-H7 from Pithecopus hypochondrialis (Orange-legged leaf frog).